Here is a 1812-residue protein sequence, read N- to C-terminus: Breast cancer type 1 susceptibility protein homolog (1812 aa).

Position 1 is an N-acetylmethionine (Met1). The segment at 24–65 (CPICLELIKEPVSTKCDHIFCKFCMLKLLNQKKGPSQCPLCK) adopts an RING-type zinc-finger fold. Lys109 participates in a covalent cross-link: Glycyl lysine isopeptide (Lys-Gly) (interchain with G-Cter in SUMO2). Ser114 carries the post-translational modification Phosphoserine. Positions 165–176 (KKNRQTQPRKKS) are enriched in basic residues. Residues 165-198 (KKNRQTQPRKKSVYIELDSDSSEETVTKPGDCSV) are disordered. Lys298 participates in a covalent cross-link: Glycyl lysine isopeptide (Lys-Gly) (interchain with G-Cter in SUMO2). Residues 321 to 332 (SKGTCNDRQVPS) are compositionally biased toward polar residues. The disordered stretch occupies residues 321–362 (SKGTCNDRQVPSTGEKVGPNADSLSDREKWTHPQSLCPENSG). Lys336 is covalently cross-linked (Glycyl lysine isopeptide (Lys-Gly) (interchain with G-Cter in SUMO2)). Over residues 352 to 362 (HPQSLCPENSG) the composition is skewed to polar residues. At Ser392 the chain carries Phosphoserine. Residues Lys440, Lys456, and Lys512 each participate in a glycyl lysine isopeptide (Lys-Gly) (interchain with G-Cter in SUMO2) cross-link. 2 disordered regions span residues 492–581 (PFTN…AKSI) and 640–767 (SEET…VSDT). Residues 538–556 (QAVSTTSNCQENKIAGSNL) are compositionally biased toward polar residues. 2 stretches are compositionally biased toward basic and acidic residues: residues 557–572 (QKEKSAHPTESLRKEP) and 669–679 (ADAKKNEPNEH). 3 positions are modified to phosphoserine: Ser686, Ser706, and Ser717. 2 stretches are compositionally biased toward polar residues: residues 702–733 (TSCSSPRKSQGPVNPSPQRTGTEQLETRQMSD) and 758–767 (STSVSLVSDT). A Phosphoserine modification is found at Ser831. 5 disordered regions span residues 864-899 (KPRSPQKDCAHSVPSKELSPKVTAKGKQKERQGQEE), 947-995 (GLSA…STEM), 1030-1056 (VCSTGDSFPGQLGRNRGPKVNTVPPLD), 1147-1185 (RESSRSPSPVTHASKSQSLHRASRKLESSEESDSTEDED), and 1205-1230 (CSSAVTQRMPEKAEGTQAPWKGSSSD). Residues 947–972 (GLSATGKSGISQNSHFKQSVSPIRSS) are compositionally biased toward polar residues. Residue Ser971 is modified to Phosphoserine; by CHEK2. Positions 973 to 991 (IKTDNRKPLTEGRFERHTS) are enriched in basic and acidic residues. Ser992 is modified (phosphoserine). Lys1048 participates in a covalent cross-link: Glycyl lysine isopeptide (Lys-Gly) (interchain with G-Cter in SUMO2). Residues 1151–1166 (RSPSPVTHASKSQSLH) show a composition bias toward polar residues. A phosphoserine mark is found at Ser1152, Ser1154, Ser1174, and Ser1180. Over residues 1175–1185 (SEESDSTEDED) the composition is skewed to acidic residues. Phosphoserine is present on Ser1241. The disordered stretch occupies residues 1244–1289 (HQFSEDPRCSGSMFSSQHSAAQGSTANANSQDSNFIPPSKQRSHQC). The span at 1255 to 1279 (SMFSSQHSAAQGSTANANSQDSNFI) shows a compositional bias: polar residues. Phosphoserine is present on residues Ser1297 and Ser1303. The span at 1313–1323 (EEDNDQEEDSI) shows a compositional bias: acidic residues. The disordered stretch occupies residues 1313-1343 (EEDNDQEEDSIIPDSEASGYESETNLSEDCS). Polar residues predominate over residues 1333 to 1343 (ESETNLSEDCS). Residue Ser1343 is modified to Phosphoserine. Thr1350 bears the Phosphothreonine mark. The interaction with PALB2 stretch occupies residues 1353 to 1380 (RATMKYNLIKLQQEMAHLEAVLEQRGNQ). A phosphoserine mark is found at Ser1413, Ser1481, and Ser1495. The disordered stretch occupies residues 1437–1547 (HLEGPTSGDD…AHIGTTPAST (111 aa)). Positions 1492 to 1504 (EASSEPHNSTGQS) are enriched in polar residues. The segment covering 1527 to 1538 (RDPESESPKEPA) has biased composition (basic and acidic residues). BRCT domains lie at 1585–1679 (SEER…EFEV) and 1698–1797 (SREK…AYLV).

In terms of assembly, heterodimer with BARD1. Part of the BRCA1-associated genome surveillance complex (BASC), which contains BRCA1, MSH2, MSH6, MLH1, ATM, BLM, PMS2 and the MRE11-RAD50-NBN protein (MRN) complex. This association could be a dynamic process changing throughout the cell cycle and within subnuclear domains. Component of the BRCA1-A complex, at least composed of BRCA1, BARD1, UIMC1/RAP80, ABRAXAS1, BRCC3/BRCC36, BABAM2 and BABAM1/NBA1. Interacts (via the BRCT domains) with ABRAXAS1 (phosphorylated form); this is important for recruitment to sites of DNA damage. Can form a heterotetramer with two molecules of ABRAXAS1 (phosphorylated form). Component of the BRCA1-RBBP8 complex. Interacts (via the BRCT domains) with RBBP8 ('Ser-327' phosphorylated form); the interaction ubiquitinates RBBP8, regulates CHEK1 activation, and involves RBBP8 in BRCA1-dependent G2/M checkpoint control on DNA damage. Associates with RNA polymerase II holoenzyme. Interacts with SMC1A, NELFB, DCLRE1C, CLSPN. CHEK1, CHEK2, BAP1, BRCC3, UBXN1 and PCLAF. Interacts (via BRCT domains) with BRIP1 (phosphorylated form). Interacts with FANCD2 (ubiquitinated form). Interacts with H2AX (phosphorylated on 'Ser-140'). Interacts (via the BRCT domains) with ACACA (phosphorylated form); the interaction prevents dephosphorylation of ACACA. Part of a BRCA complex containing BRCA1, BRCA2 and PALB2. Interacts directly with PALB2; the interaction is essential for its function in HRR. Interacts directly with BRCA2; the interaction occurs only in the presence of PALB2 which serves as the bridging protein. Interacts (via the BRCT domains) with LMO4; the interaction represses the transcriptional activity of BRCA1. Interacts (via the BRCT domains) with CCAR2 (via N-terminus); the interaction represses the transcriptional activator activity of BRCA1. Interacts with EXD2. Interacts (via C-terminus) with DHX9; this interaction is direct and links BRCA1 to the RNA polymerase II holoenzyme. Interacts with DNA helicase ZGRF1; the interaction is increased following DNA damage induction. In terms of processing, phosphorylated in response to IR, UV, and various stimuli that cause checkpoint activation, probably by ATM or ATR. Phosphorylation at Ser-971 by CHEK2 regulates mitotic spindle assembly. Phosphorylation by AURKA regulates centrosomal microtubule nucleation. Autoubiquitinated, undergoes 'Lys-6'-linked polyubiquitination. 'Lys-6'-linked polyubiquitination does not promote degradation. As to expression, in the embryo, expressed in otic vesicles at day 9.5. At day 10.5, this expression decreases and high levels are found in the neuroectoderm. At days 11-12.5, high levels in differentiating keratinocytes and whisker pad primordia. At days 14-17, expression also observed in kidney epithelial cells. In the adult, highest levels found in spleen, thymus, lymph nodes, epithelial organs, and alveolar and ductal epithelial cells of the mammary gland. Very low levels in brain, kidney, and skin. No expression in heart, liver or lung.

It is found in the nucleus. The protein localises to the chromosome. The protein resides in the cytoplasm. It carries out the reaction S-ubiquitinyl-[E2 ubiquitin-conjugating enzyme]-L-cysteine + [acceptor protein]-L-lysine = [E2 ubiquitin-conjugating enzyme]-L-cysteine + N(6)-ubiquitinyl-[acceptor protein]-L-lysine.. It functions in the pathway protein modification; protein ubiquitination. E3 ubiquitin-protein ligase that specifically mediates the formation of 'Lys-6'-linked polyubiquitin chains and plays a central role in DNA repair by facilitating cellular responses to DNA damage. It is unclear whether it also mediates the formation of other types of polyubiquitin chains. The BRCA1-BARD1 heterodimer coordinates a diverse range of cellular pathways such as DNA damage repair, ubiquitination and transcriptional regulation to maintain genomic stability. Regulates centrosomal microtubule nucleation. Required for appropriate cell cycle arrests after ionizing irradiation in both the S-phase and the G2 phase of the cell cycle. Required for FANCD2 targeting to sites of DNA damage. Inhibits lipid synthesis by binding to inactive phosphorylated ACACA and preventing its dephosphorylation. Contributes to homologous recombination repair (HRR) via its direct interaction with PALB2, fine-tunes recombinational repair partly through its modulatory role in the PALB2-dependent loading of BRCA2-RAD51 repair machinery at DNA breaks. Component of the BRCA1-RBBP8 complex which regulates CHEK1 activation and controls cell cycle G2/M checkpoints on DNA damage via BRCA1-mediated ubiquitination of RBBP8. Acts as a transcriptional activator. This chain is Breast cancer type 1 susceptibility protein homolog (Brca1), found in Mus musculus (Mouse).